A 126-amino-acid polypeptide reads, in one-letter code: MAIVGLGTDIAEIERVEKALARSGVAFAERILSAQEMETFVSLKQQGRFLAKRFAAKEAASKALGTGIAHGVSFQDFTIKNDDNGKPYLQLAGRAAELAHQMGVCHTHLSLSDERHYAVATVIFES.

Residues Asp9 and Glu58 each coordinate Mg(2+).

It belongs to the P-Pant transferase superfamily. AcpS family. It depends on Mg(2+) as a cofactor.

The protein localises to the cytoplasm. The enzyme catalyses apo-[ACP] + CoA = holo-[ACP] + adenosine 3',5'-bisphosphate + H(+). Its function is as follows. Transfers the 4'-phosphopantetheine moiety from coenzyme A to a Ser of acyl-carrier-protein. The chain is Holo-[acyl-carrier-protein] synthase from Vibrio vulnificus (strain CMCP6).